The primary structure comprises 1103 residues: Mediator of RNA polymerase II transcription subunit 14 (1103 aa).

3 disordered regions span residues 1-63 (MPGV…GYKQ), 120-140 (VPPQ…LGNQ), and 1054-1103 (LETK…ITID). Polar residues predominate over residues 1073–1103 (SGNTVQNARLENKSPQKAAATHSNADVITID).

It belongs to the Mediator complex subunit 14 family. In terms of assembly, component of the Mediator complex.

The protein localises to the nucleus. Its function is as follows. Component of the Mediator complex, a coactivator involved in the regulated transcription of nearly all RNA polymerase II-dependent genes. Mediator functions as a bridge to convey information from gene-specific regulatory proteins to the basal RNA polymerase II transcription machinery. Mediator is recruited to promoters by direct interactions with regulatory proteins and serves as a scaffold for the assembly of a functional preinitiation complex with RNA polymerase II and the general transcription factors. This chain is Mediator of RNA polymerase II transcription subunit 14 (rgr1), found in Aspergillus terreus (strain NIH 2624 / FGSC A1156).